Here is a 716-residue protein sequence, read N- to C-terminus: Translation initiation factor IF-2 (716 aa).

The disordered stretch occupies residues 53-135; it reads GGAGVTSQKP…PLKPKKELPE (83 aa). Residues 57-83 show a composition bias toward polar residues; the sequence is VTSQKPAETNKNKPQGINQQPAGNQPN. The span at 93–109 shows a compositional bias: low complexity; the sequence is VQNNQFNKNKKNNNNNK. Residues 217–386 enclose the tr-type G domain; it reads IRPPVVTIMG…LLVSEVEELK (170 aa). The tract at residues 226-233 is G1; sequence GHVDHGKT. 226 to 233 provides a ligand contact to GTP; the sequence is GHVDHGKT. The interval 251-255 is G2; the sequence is GITQH. The tract at residues 272–275 is G3; the sequence is DTPG. GTP is bound by residues 272 to 276 and 326 to 329; these read DTPGH and NKVD. The tract at residues 326 to 329 is G4; that stretch reads NKVD. Residues 362 to 364 form a G5 region; sequence SAL.

This sequence belongs to the TRAFAC class translation factor GTPase superfamily. Classic translation factor GTPase family. IF-2 subfamily.

Its subcellular location is the cytoplasm. Functionally, one of the essential components for the initiation of protein synthesis. Protects formylmethionyl-tRNA from spontaneous hydrolysis and promotes its binding to the 30S ribosomal subunits. Also involved in the hydrolysis of GTP during the formation of the 70S ribosomal complex. The polypeptide is Translation initiation factor IF-2 (Bacillus velezensis (strain DSM 23117 / BGSC 10A6 / LMG 26770 / FZB42) (Bacillus amyloliquefaciens subsp. plantarum)).